The primary structure comprises 75 residues: Signaling peptide TAXIMIN 1 (75 aa).

An N-terminal signal peptide occupies residues Met-1 to Val-29.

As to expression, expressed in shoot apical meristems (SAM); mostly specific to the L1 layer in the center of the meristem but also detected in the L2 layer in organ primordia. Also observed in the vasculature of seedling roots.

It is found in the secreted. Counteracted by the antibiotic cefotaxime during responses to light stress. Signaling peptide involved in the regulation of lateral organs separation, including fruits and leaves. Involved in the perception of and response to light stress via the control of sinapoyl-malate accumulation, a UV-B protecting compound. This Arabidopsis thaliana (Mouse-ear cress) protein is Signaling peptide TAXIMIN 1.